The sequence spans 227 residues: Cytochrome c oxidase subunit 2 (227 aa).

Over 1–14 (MAYPFQLGLQDATS) the chain is Mitochondrial intermembrane. The helical transmembrane segment at 15–45 (PIMEELTNFHDHTLMIVFLISSLVLYIISLM) threads the bilayer. Over 46 to 59 (LTTKLTHTSTMDAQ) the chain is Mitochondrial matrix. Residues 60 to 87 (EVETIWTILPAVILILIALPSLRILYMM) form a helical membrane-spanning segment. The Mitochondrial intermembrane segment spans residues 88-227 (DEINNPALTV…YFENWSASMI (140 aa)). Residues histidine 161, cysteine 196, glutamate 198, cysteine 200, histidine 204, and methionine 207 each contribute to the Cu cation site. Mg(2+) is bound at residue glutamate 198. The residue at position 218 (tyrosine 218) is a Phosphotyrosine.

Belongs to the cytochrome c oxidase subunit 2 family. As to quaternary structure, component of the cytochrome c oxidase (complex IV, CIV), a multisubunit enzyme composed of 14 subunits. The complex is composed of a catalytic core of 3 subunits MT-CO1, MT-CO2 and MT-CO3, encoded in the mitochondrial DNA, and 11 supernumerary subunits COX4I, COX5A, COX5B, COX6A, COX6B, COX6C, COX7A, COX7B, COX7C, COX8 and NDUFA4, which are encoded in the nuclear genome. The complex exists as a monomer or a dimer and forms supercomplexes (SCs) in the inner mitochondrial membrane with NADH-ubiquinone oxidoreductase (complex I, CI) and ubiquinol-cytochrome c oxidoreductase (cytochrome b-c1 complex, complex III, CIII), resulting in different assemblies (supercomplex SCI(1)III(2)IV(1) and megacomplex MCI(2)III(2)IV(2)). Found in a complex with TMEM177, COA6, COX18, COX20, SCO1 and SCO2. Interacts with TMEM177 in a COX20-dependent manner. Interacts with COX20. Interacts with COX16. Requires Cu cation as cofactor.

Its subcellular location is the mitochondrion inner membrane. The enzyme catalyses 4 Fe(II)-[cytochrome c] + O2 + 8 H(+)(in) = 4 Fe(III)-[cytochrome c] + 2 H2O + 4 H(+)(out). Component of the cytochrome c oxidase, the last enzyme in the mitochondrial electron transport chain which drives oxidative phosphorylation. The respiratory chain contains 3 multisubunit complexes succinate dehydrogenase (complex II, CII), ubiquinol-cytochrome c oxidoreductase (cytochrome b-c1 complex, complex III, CIII) and cytochrome c oxidase (complex IV, CIV), that cooperate to transfer electrons derived from NADH and succinate to molecular oxygen, creating an electrochemical gradient over the inner membrane that drives transmembrane transport and the ATP synthase. Cytochrome c oxidase is the component of the respiratory chain that catalyzes the reduction of oxygen to water. Electrons originating from reduced cytochrome c in the intermembrane space (IMS) are transferred via the dinuclear copper A center (CU(A)) of subunit 2 and heme A of subunit 1 to the active site in subunit 1, a binuclear center (BNC) formed by heme A3 and copper B (CU(B)). The BNC reduces molecular oxygen to 2 water molecules using 4 electrons from cytochrome c in the IMS and 4 protons from the mitochondrial matrix. The chain is Cytochrome c oxidase subunit 2 (MT-CO2) from Oenomys hypoxanthus (Rufous-nosed rat).